Consider the following 1096-residue polypeptide: DNA-directed RNA polymerase subunit beta (1096 aa).

The disordered stretch occupies residues 1069 to 1096; that stretch reads DLMQDVNPRRSTPSRPTYESLGSDYQED.

Belongs to the RNA polymerase beta chain family. In terms of assembly, in cyanobacteria the RNAP catalytic core is composed of 2 alpha, 1 beta, 1 beta', 1 gamma and 1 omega subunit. When a sigma factor is associated with the core the holoenzyme is formed, which can initiate transcription.

The catalysed reaction is RNA(n) + a ribonucleoside 5'-triphosphate = RNA(n+1) + diphosphate. DNA-dependent RNA polymerase catalyzes the transcription of DNA into RNA using the four ribonucleoside triphosphates as substrates. In Prochlorococcus marinus (strain SARG / CCMP1375 / SS120), this protein is DNA-directed RNA polymerase subunit beta.